Here is a 331-residue protein sequence, read N- to C-terminus: Smad-related protein daf-14 (331 aa).

One can recognise an MH2 domain in the interval tryptophan 134 to serine 331. The tract at residues glutamate 168–isoleucine 187 is disordered. Residues serine 175–serine 185 show a composition bias toward low complexity.

Interacts with R-SMAD daf-8 and co-SMAD daf-3. Interacts with daf-3 in a daf-8 dependent manner.

In terms of biological role, probably an atypical receptor-regulated SMAD (R-SMAD) that is an intracellular signal transducer and transcriptional modulator activated by TGF-beta-like daf-7 signaling. Plays a role in TGF-beta-like daf-7 signaling in regulating entry into a developmentally arrested larval state known as dauer, in response to harsh environmental conditions; partially redundant with R-SMAD daf-8. This is Smad-related protein daf-14 from Caenorhabditis elegans.